A 683-amino-acid polypeptide reads, in one-letter code: Hexamerin 70b (683 aa).

Residues 1–21 (MIVIMKAGFLFLASLCLLVQA) form the signal peptide. The region spanning 32–153 (VTRQKNIYEL…VAVIHRPDTK (122 aa)) is the Hemocyanin N-terminal domain. One can recognise a Hemocyanin middle domain in the interval 159 to 428 (PMYEVMPHLY…SIYKTILDYY (270 aa)). Asparagine 203 carries an N-linked (GlcNAc...) asparagine glycan. In terms of domain architecture, Hemocyanin C-terminal spans 437–673 (KYTTEELNFP…IHVKEVLVHH (237 aa)).

This sequence belongs to the hemocyanin/hexamerin family. As to quaternary structure, probable homohexamer. As to expression, expressed in the fat body and secreted into the hemolymph (at protein level). Present in trophocytes and oenocytes of the fat body (at protein level).

The protein resides in the secreted. The protein localises to the nucleus. Its subcellular location is the cytoplasm. It is found in the cytoplasmic granule. Its function is as follows. Storage protein that may function as a nutrient supply to compensate for lack of dietary proteins during metamorphosis and egg production. The chain is Hexamerin 70b from Apis mellifera (Honeybee).